Here is a 625-residue protein sequence, read N- to C-terminus: 1,4-alpha-glucan branching enzyme GlgB (625 aa).

The active-site Nucleophile is aspartate 302. Residue glutamate 355 is the Proton donor of the active site.

It belongs to the glycosyl hydrolase 13 family. GlgB subfamily. Monomer.

It catalyses the reaction Transfers a segment of a (1-&gt;4)-alpha-D-glucan chain to a primary hydroxy group in a similar glucan chain.. It participates in glycan biosynthesis; glycogen biosynthesis. Catalyzes the formation of the alpha-1,6-glucosidic linkages in glycogen by scission of a 1,4-alpha-linked oligosaccharide from growing alpha-1,4-glucan chains and the subsequent attachment of the oligosaccharide to the alpha-1,6 position. This chain is 1,4-alpha-glucan branching enzyme GlgB, found in Albidiferax ferrireducens (strain ATCC BAA-621 / DSM 15236 / T118) (Rhodoferax ferrireducens).